A 129-amino-acid polypeptide reads, in one-letter code: MLFDVKAPILGFETIHKMHLQKVDEIFLRLNSAEDNSVVSFTLVNPFALRKYEFEVPTPLKILLELEGAKSVLIANIMVVQTPIELSTVNYLAPLIFNLDKQLMGQVVLDSNKYPHYHLRENILSHTHE.

It belongs to the FliW family. Interacts with translational regulator CsrA and flagellin(s).

The protein localises to the cytoplasm. Functionally, acts as an anti-CsrA protein, binds CsrA and prevents it from repressing translation of its target genes, one of which is flagellin. Binds to flagellin and participates in the assembly of the flagellum. This is Flagellar assembly factor FliW 2 from Helicobacter pylori (strain HPAG1).